The sequence spans 213 residues: Nicolin-1 (213 aa).

Part of the neuronal tubulin polyglutamylase complex which contains TPGS1, TPGS2, TTLL1, LRRC49 and NICN1. In terms of tissue distribution, high expression level is found in brain, testis, liver and kidney. Weak expression in spleen, leukocytes, small intestin and colon.

It localises to the nucleus. This Mus musculus (Mouse) protein is Nicolin-1 (Nicn1).